The primary structure comprises 188 residues: CASP-like protein 4B3 (188 aa).

Residues 1 to 21 (MSFSPASSEPHDAPAAAGSSV) form a disordered region. Topologically, residues 1–42 (MSFSPASSEPHDAPAAAGSSVPASRSIAERWKMEAAPIRARL) are cytoplasmic. Residues 43-63 (LLRAFAWLFSLLALVVMATDV) traverse the membrane as a helical segment. Residues 64-76 (HGRGGAQDFSTYP) are Extracellular-facing. A helical transmembrane segment spans residues 77 to 97 (EYNYCLGMSIIALLYATAQLV). Over 98-114 (RDAHRLSSGRDLVAGRK) the chain is Cytoplasmic. The helical transmembrane segment at 115–135 (AAAVVDFAGDQVVAYSLISGL) threads the bilayer. Topologically, residues 136-156 (SAAAPVTDYMRQATDNLFNDS) are extracellular. N-linked (GlcNAc...) asparagine glycosylation occurs at Asn-154. The chain crosses the membrane as a helical span at residues 157–177 (AAAAISLAFFAFLAISLSALI). The Cytoplasmic segment spans residues 178–188 (SGYNLSLEAIV).

The protein belongs to the Casparian strip membrane proteins (CASP) family. In terms of assembly, homodimer and heterodimers.

The protein resides in the cell membrane. The chain is CASP-like protein 4B3 from Hordeum vulgare subsp. vulgare (Domesticated barley).